A 187-amino-acid polypeptide reads, in one-letter code: ATP synthase subunit delta, chloroplastic (187 aa).

The protein belongs to the ATPase delta chain family. In terms of assembly, F-type ATPases have 2 components, F(1) - the catalytic core - and F(0) - the membrane proton channel. F(1) has five subunits: alpha(3), beta(3), gamma(1), delta(1), epsilon(1). CF(0) has four main subunits: a(1), b(1), b'(1) and c(10-14). The alpha and beta chains form an alternating ring which encloses part of the gamma chain. F(1) is attached to F(0) by a central stalk formed by the gamma and epsilon chains, while a peripheral stalk is formed by the delta, b and b' chains.

Its subcellular location is the plastid. The protein localises to the chloroplast thylakoid membrane. Its function is as follows. F(1)F(0) ATP synthase produces ATP from ADP in the presence of a proton or sodium gradient. F-type ATPases consist of two structural domains, F(1) containing the extramembraneous catalytic core and F(0) containing the membrane proton channel, linked together by a central stalk and a peripheral stalk. During catalysis, ATP synthesis in the catalytic domain of F(1) is coupled via a rotary mechanism of the central stalk subunits to proton translocation. This protein is part of the stalk that links CF(0) to CF(1). It either transmits conformational changes from CF(0) to CF(1) or is implicated in proton conduction. This chain is ATP synthase subunit delta, chloroplastic, found in Thalassiosira pseudonana (Marine diatom).